The primary structure comprises 256 residues: NAD-dependent protein deacylase 4 (256 aa).

The Deacetylase sirtuin-type domain maps to 1–250; the sequence is MRLPAEALKD…AKIHESLSTG (250 aa). Residue 19–39 participates in NAD(+) binding; that stretch reads GAGISAESGILTYLDQMPKLW. 2 residues coordinate substrate: Tyr-64 and Arg-67. Residue 98 to 101 coordinates NAD(+); that stretch reads QNVD. His-116 functions as the Proton acceptor in the catalytic mechanism. Zn(2+) contacts are provided by Cys-124, Cys-127, Cys-152, and Cys-155. NAD(+) contacts are provided by residues 192–194, 218–220, and Ala-236; these read GTS and NTV.

This sequence belongs to the sirtuin family. Class III subfamily. The cofactor is Zn(2+).

Its subcellular location is the cytoplasm. The catalysed reaction is N(6)-acetyl-L-lysyl-[protein] + NAD(+) + H2O = 2''-O-acetyl-ADP-D-ribose + nicotinamide + L-lysyl-[protein]. It catalyses the reaction N(6)-succinyl-L-lysyl-[protein] + NAD(+) + H2O = 2''-O-succinyl-ADP-D-ribose + nicotinamide + L-lysyl-[protein]. NAD-dependent lysine deacetylase and desuccinylase that specifically removes acetyl and succinyl groups on target proteins. Modulates the activities of several proteins which are inactive in their acylated form. The protein is NAD-dependent protein deacylase 4 of Pseudomonas syringae pv. tomato (strain ATCC BAA-871 / DC3000).